The following is a 1292-amino-acid chain: HMG domain-containing protein 3 (1292 aa).

A DNA-binding region (HMG box) is located at residues 42-110 (TKKPRSAYLL…GLDPNSKLSA (69 aa)). Disordered regions lie at residues 363–391 (SKGS…KLTL), 448–505 (VQPE…GRAR), and 562–588 (KQLG…NRTS). Residues 370–391 (RNQQPVTTEQNSSKENASKLTL) are compositionally biased toward polar residues. Over residues 467-478 (PTPSEGTSTSSP) the composition is skewed to low complexity. Polar residues predominate over residues 562–572 (KQLGQPIQQPS).

The protein resides in the nucleus. This is HMG domain-containing protein 3 from Homo sapiens (Human).